Reading from the N-terminus, the 271-residue chain is Mannosyl-3-phosphoglycerate phosphatase (271 aa).

Asp-13 functions as the Nucleophile in the catalytic mechanism. Residues Asp-13, Asp-15, and Asp-214 each contribute to the Mg(2+) site.

It belongs to the HAD-like hydrolase superfamily. MPGP family. The cofactor is Mg(2+).

The protein localises to the cytoplasm. The enzyme catalyses 2-O-(alpha-D-mannosyl)-3-phosphoglycerate + H2O = (2R)-2-O-(alpha-D-mannosyl)-glycerate + phosphate. The protein is Mannosyl-3-phosphoglycerate phosphatase of Escherichia coli O7:K1 (strain IAI39 / ExPEC).